Consider the following 156-residue polypeptide: Transcription antitermination protein NusB (156 aa).

It belongs to the NusB family.

In terms of biological role, involved in transcription antitermination. Required for transcription of ribosomal RNA (rRNA) genes. Binds specifically to the boxA antiterminator sequence of the ribosomal RNA (rrn) operons. The chain is Transcription antitermination protein NusB from Bartonella tribocorum (strain CIP 105476 / IBS 506).